The primary structure comprises 32 residues: Yop proteins translocation protein A (32 aa).

The sequence is that of Yop proteins translocation protein A (yscA) from Yersinia pestis.